We begin with the raw amino-acid sequence, 110 residues long: Subtilisin inhibitor-like protein 1 (110 aa).

Cystine bridges form between cysteine 30/cysteine 44 and cysteine 68/cysteine 98.

Belongs to the protease inhibitor I16 (SSI) family. As to quaternary structure, homodimer.

It is found in the secreted. In terms of biological role, strong inhibitor of subtilisin BPN'. This chain is Subtilisin inhibitor-like protein 1, found in Streptomyces cacaoi.